A 199-amino-acid chain; its full sequence is Fe/S biogenesis protein NfuA (199 aa).

[4Fe-4S] cluster-binding residues include Cys156 and Cys159.

The protein belongs to the NfuA family. In terms of assembly, homodimer. The cofactor is [4Fe-4S] cluster.

Functionally, involved in iron-sulfur cluster biogenesis. Binds a 4Fe-4S cluster, can transfer this cluster to apoproteins, and thereby intervenes in the maturation of Fe/S proteins. Could also act as a scaffold/chaperone for damaged Fe/S proteins. This Actinobacillus pleuropneumoniae serotype 5b (strain L20) protein is Fe/S biogenesis protein NfuA.